A 183-amino-acid chain; its full sequence is MKFSLFFSVFFLAVLHACLSESEIDLEDEEHFMSSDSFLSEIQDESRGKTCIERNKECTNDRHGCCRGKIFKDKCTCVKNGKTEKCVCTQKKWAKIIESYIGDIPALPKPVDDKCVPKHADCSKRKDECCKGGIFKYQCKCYDMYDDDGEKTDLCGCVSPVEHQAIEGALRIAKKLIGDRWGR.

The first 20 residues, 1–20 (MKFSLFFSVFFLAVLHACLS), serve as a signal peptide directing secretion. Positions 21 to 47 (ESEIDLEDEEHFMSSDSFLSEIQDESR) are excised as a propeptide. Positions 44–47 (DESR) match the Processing quadruplet motif motif. Intrachain disulfides connect cysteine 51-cysteine 66, cysteine 58-cysteine 75, cysteine 65-cysteine 88, cysteine 77-cysteine 86, cysteine 115-cysteine 130, cysteine 122-cysteine 139, cysteine 129-cysteine 157, and cysteine 141-cysteine 155. Residues 164–177 (QAIEGALRIAKKLI) form a predicted alpha-helix region. Residue tryptophan 181 is modified to Tryptophan amide.

The protein belongs to the neurotoxin 19 (CSTX) family. Double-CSTX subfamily. Post-translationally, cleavage of the propeptide depends on the processing quadruplet motif (XXXR, with at least one of X being E). Expressed by the venom gland.

Its subcellular location is the secreted. The protein resides in the target cell membrane. Spider venom toxin that exhibits cytolytic activity by forming an alpha-helix across the membrane. Lethal to insect larvae. Causes instant paralysis and death in the larvae of the flesh fly (S.carnaria) at doses of 20 ug/g, at doses of less than 10 ug/g causes reversible paralysis. Has cytolytic activity against insect Sf9 cells. Causes stable and irreversible depolarization of fly muscle fibers, leading to contracture at higher toxin concentrations. Destabilizes membranes. The sequence is that of DELTA-miturgitoxin-Cp1b from Cheiracanthium punctorium (Yellow sac spider).